A 533-amino-acid chain; its full sequence is Tyrosine ammonia-lyase (533 aa).

Catalysis depends on Tyr57, which acts as the Proton donor/acceptor. A substrate-binding site is contributed by His87. A cross-link (5-imidazolinone (Ala-Gly)) is located at residues 146-148 (ASG). Ser147 is subject to 2,3-didehydroalanine (Ser). Residues Asn200 and Arg305 each contribute to the substrate site.

This sequence belongs to the TAL/TAM family. In terms of assembly, homotetramer; dimer of dimers. In terms of processing, contains an active site 4-methylidene-imidazol-5-one (MIO), which is formed autocatalytically by cyclization and dehydration of residues Ala-Ser-Gly.

The catalysed reaction is L-tyrosine = (E)-4-coumarate + NH4(+). It catalyses the reaction L-tyrosine = 3-amino-3-(4-hydroxyphenyl)propanoate. Has ammonia-lyase and, to a lesser extent, aminomutase activity. Catalyzes the rearrangement of L-tyrosine to R-beta-tyrosine and S-beta-tyrosine. Does not accept L-histidine or L-phenylalanine as substrates. This chain is Tyrosine ammonia-lyase, found in Cupriavidus metallidurans (strain ATCC 43123 / DSM 2839 / NBRC 102507 / CH34) (Ralstonia metallidurans).